The primary structure comprises 199 residues: MDTLFNSTEKNARGIPQAPFIENVNEIIKDPSDFELCFNKFQERLSKYKFMQESKLATIKQLKTRIPDLENTLKICQSLRNHSDEGDESDEPILLHYQLNDTLYTKAQVDIPEDRADLKVGLWLGADVMLEYPIDEAIELLKKKLADSEQSLTVSTEDVEFLRENITTMEVNCARLYNWDVQRRQDLKQAQEGTKNLKI.

Met1 carries the post-translational modification N-acetylmethionine.

This sequence belongs to the prefoldin subunit alpha family. As to quaternary structure, heterohexamer of two PFD-alpha type and four PFD-beta type subunits.

Functionally, binds specifically to cytosolic chaperonin (c-CPN) and transfers target proteins to it. Binds to nascent polypeptide chain and promotes folding in an environment in which there are many competing pathways for nonnative proteins. The protein is Prefoldin subunit 3 (PAC10) of Saccharomyces cerevisiae (strain ATCC 204508 / S288c) (Baker's yeast).